The chain runs to 239 residues: Pimeloyl-[acyl-carrier protein] methyl ester esterase (239 aa).

Residues Trp-20, 77-78 (SM), and 138-142 (FISLQ) each bind substrate. Ser-77 (nucleophile) is an active-site residue. Catalysis depends on residues Asp-192 and His-220. His-220 contributes to the substrate binding site.

The protein belongs to the AB hydrolase superfamily. Carboxylesterase BioH family. In terms of assembly, monomer.

It localises to the cytoplasm. The catalysed reaction is 6-carboxyhexanoyl-[ACP] methyl ester + H2O = 6-carboxyhexanoyl-[ACP] + methanol + H(+). It functions in the pathway cofactor biosynthesis; biotin biosynthesis. In terms of biological role, the physiological role of BioH is to remove the methyl group introduced by BioC when the pimeloyl moiety is complete. It allows to synthesize pimeloyl-ACP via the fatty acid synthetic pathway through the hydrolysis of the ester bonds of pimeloyl-ACP esters. The chain is Pimeloyl-[acyl-carrier protein] methyl ester esterase from Legionella pneumophila (strain Lens).